The chain runs to 262 residues: Acetylglutamate kinase (262 aa).

Substrate-binding positions include 48-49, Arg70, and Asn162; that span reads GG.

It belongs to the acetylglutamate kinase family. ArgB subfamily.

It localises to the cytoplasm. The enzyme catalyses N-acetyl-L-glutamate + ATP = N-acetyl-L-glutamyl 5-phosphate + ADP. It functions in the pathway amino-acid biosynthesis; L-arginine biosynthesis; N(2)-acetyl-L-ornithine from L-glutamate: step 2/4. In terms of biological role, catalyzes the ATP-dependent phosphorylation of N-acetyl-L-glutamate. The chain is Acetylglutamate kinase from Vibrio cholerae serotype O1 (strain ATCC 39541 / Classical Ogawa 395 / O395).